A 276-amino-acid polypeptide reads, in one-letter code: MNIWDIIVAIILGIVEGLTEYAPVSSTGHMIIVDDVWLKSKELLTPEAANTFKVVIQLGSILAVAFVFKDRILNLLGMKKNITEEQKSGNRLSIAQIAVGLVPAAVLGFLFEDYIDQYLFSVRTVAVGLIAGAVLMLAADWINRRKDTTDSVDRMTYKQALGMGLFQCLALWPGFSRSGSTISGGVILGLSHRAAADFTFIMAIPIMMGASLLSLIKNWAYLSADLLPFFIAGFISAFIVALFVVRFFLRLINKIKLVPFAIYRIVLGLLLFILFL.

7 helical membrane-spanning segments follow: residues 3-23, 48-68, 92-112, 119-139, 196-216, 225-245, and 255-275; these read IWDI…EYAP, AANT…AFVF, LSIA…FLFE, LFSV…MLAA, ADFT…LSLI, DLLP…LFVV, and IKLV…FILF.

The protein belongs to the UppP family.

The protein localises to the cell membrane. The enzyme catalyses di-trans,octa-cis-undecaprenyl diphosphate + H2O = di-trans,octa-cis-undecaprenyl phosphate + phosphate + H(+). Its function is as follows. Catalyzes the dephosphorylation of undecaprenyl diphosphate (UPP). Confers resistance to bacitracin. The polypeptide is Undecaprenyl-diphosphatase 2 (Bacillus licheniformis (strain ATCC 14580 / DSM 13 / JCM 2505 / CCUG 7422 / NBRC 12200 / NCIMB 9375 / NCTC 10341 / NRRL NRS-1264 / Gibson 46)).